We begin with the raw amino-acid sequence, 296 residues long: Light-independent protochlorophyllide reductase iron-sulfur ATP-binding protein (296 aa).

ATP is bound by residues 10 to 15 (GIGKST) and lysine 39. Serine 14 contacts Mg(2+). Positions 95 and 129 each coordinate [4Fe-4S] cluster. Residue 180 to 181 (NR) coordinates ATP.

Belongs to the NifH/BchL/ChlL family. Homodimer. Protochlorophyllide reductase is composed of three subunits; ChlL, ChlN and ChlB. [4Fe-4S] cluster serves as cofactor.

The protein resides in the plastid. It is found in the chloroplast. The enzyme catalyses chlorophyllide a + oxidized 2[4Fe-4S]-[ferredoxin] + 2 ADP + 2 phosphate = protochlorophyllide a + reduced 2[4Fe-4S]-[ferredoxin] + 2 ATP + 2 H2O. It functions in the pathway porphyrin-containing compound metabolism; chlorophyll biosynthesis (light-independent). In terms of biological role, component of the dark-operative protochlorophyllide reductase (DPOR) that uses Mg-ATP and reduced ferredoxin to reduce ring D of protochlorophyllide (Pchlide) to form chlorophyllide a (Chlide). This reaction is light-independent. The L component serves as a unique electron donor to the NB-component of the complex, and binds Mg-ATP. The chain is Light-independent protochlorophyllide reductase iron-sulfur ATP-binding protein from Mesostigma viride (Green alga).